A 96-amino-acid polypeptide reads, in one-letter code: Co-chaperonin GroES (96 aa).

Belongs to the GroES chaperonin family. As to quaternary structure, heptamer of 7 subunits arranged in a ring. Interacts with the chaperonin GroEL.

The protein localises to the cytoplasm. In terms of biological role, together with the chaperonin GroEL, plays an essential role in assisting protein folding. The GroEL-GroES system forms a nano-cage that allows encapsulation of the non-native substrate proteins and provides a physical environment optimized to promote and accelerate protein folding. GroES binds to the apical surface of the GroEL ring, thereby capping the opening of the GroEL channel. This chain is Co-chaperonin GroES, found in Hyphomonas neptunium (strain ATCC 15444).